The sequence spans 93 residues: Small ribosomal subunit protein uS19m (93 aa).

The protein belongs to the universal ribosomal protein uS19 family. In terms of assembly, component of the mitochondrial small ribosomal subunit (mt-SSU). Mature yeast 74S mitochondrial ribosomes consist of a small (37S) and a large (54S) subunit. The 37S small subunit contains a 15S ribosomal RNA (15S mt-rRNA) and at least 32 different proteins. The 54S large subunit contains a 21S rRNA (21S mt-rRNA) and at least 45 different proteins.

It is found in the mitochondrion. In terms of biological role, component of the mitochondrial ribosome (mitoribosome), a dedicated translation machinery responsible for the synthesis of mitochondrial genome-encoded proteins, including at least some of the essential transmembrane subunits of the mitochondrial respiratory chain. The mitoribosomes are attached to the mitochondrial inner membrane and translation products are cotranslationally integrated into the membrane. This is Small ribosomal subunit protein uS19m (rsm19) from Schizosaccharomyces pombe (strain 972 / ATCC 24843) (Fission yeast).